The primary structure comprises 141 residues: Probable mitochondrial pyruvate carrier 1 (141 aa).

A run of 2 helical transmembrane segments spans residues 31–52 and 60–82; these read YLCSTHFWGPLSNFGIPIAAIL and LISGRMTGALILYSSVFMRYAWM.

It belongs to the mitochondrial pyruvate carrier (MPC) (TC 2.A.105) family. The functional 150 kDa pyruvate import complex is a heteromer of mpc1 and mpc2.

The protein localises to the mitochondrion. It is found in the mitochondrion inner membrane. Mediates the uptake of pyruvate into mitochondria. This Schizosaccharomyces pombe (strain 972 / ATCC 24843) (Fission yeast) protein is Probable mitochondrial pyruvate carrier 1.